We begin with the raw amino-acid sequence, 210 residues long: Uridine kinase P10 (210 aa).

10–18 provides a ligand contact to ATP; sequence GISGSGKST. Residue Asp41 is part of the active site.

Belongs to the uridine kinase family. As to quaternary structure, interacts with host eIF-2B; this interaction disrupts the interaction between eIF2 and eIF-2B, which leads to the inhibition of stress granules formation.

Its subcellular location is the host cytoplasm. The protein resides in the host perinuclear region. It catalyses the reaction uridine + ATP = UMP + ADP + H(+). Inhibits the integrated stress response (ISR) in the infected cell by preventing the sequestration of eIF2B by phosphorylated EIF2S1/eIF-2alpha. Stress granule formation in response to EIF2S1/eIF-2alpha phosphorylation is thus inhibited, which allows protein synthesis and viral replication. Phosphorylates uridine to uridine monophosphate. In Beluga whale coronavirus (strain SW1) (BwCoV), this protein is Uridine kinase P10 (ORF10).